Reading from the N-terminus, the 227-residue chain is Cytochrome c oxidase subunit 2 (227 aa).

Over 1–14 (MAHPVQLGLQDATS) the chain is Mitochondrial intermembrane. Residues 15 to 45 (PVMEELITFHDYALMTISLISFLVLYALFST) traverse the membrane as a helical segment. Over 46–59 (LTTKLTNTNITDAQ) the chain is Mitochondrial matrix. The helical transmembrane segment at 60–87 (EMETTWTILPAVILILIALPSLRILYLT) threads the bilayer. The Mitochondrial intermembrane portion of the chain corresponds to 88–227 (DEINNPSFTI…IFEMGPVFTL (140 aa)). Residues histidine 161, cysteine 196, glutamate 198, cysteine 200, histidine 204, and methionine 207 each contribute to the Cu cation site. Glutamate 198 is a binding site for Mg(2+).

The protein belongs to the cytochrome c oxidase subunit 2 family. Component of the cytochrome c oxidase (complex IV, CIV), a multisubunit enzyme composed of 14 subunits. The complex is composed of a catalytic core of 3 subunits MT-CO1, MT-CO2 and MT-CO3, encoded in the mitochondrial DNA, and 11 supernumerary subunits COX4I, COX5A, COX5B, COX6A, COX6B, COX6C, COX7A, COX7B, COX7C, COX8 and NDUFA4, which are encoded in the nuclear genome. The complex exists as a monomer or a dimer and forms supercomplexes (SCs) in the inner mitochondrial membrane with NADH-ubiquinone oxidoreductase (complex I, CI) and ubiquinol-cytochrome c oxidoreductase (cytochrome b-c1 complex, complex III, CIII), resulting in different assemblies (supercomplex SCI(1)III(2)IV(1) and megacomplex MCI(2)III(2)IV(2)). Found in a complex with TMEM177, COA6, COX18, COX20, SCO1 and SCO2. Interacts with TMEM177 in a COX20-dependent manner. Interacts with COX20. Interacts with COX16. The cofactor is Cu cation.

Its subcellular location is the mitochondrion inner membrane. It catalyses the reaction 4 Fe(II)-[cytochrome c] + O2 + 8 H(+)(in) = 4 Fe(III)-[cytochrome c] + 2 H2O + 4 H(+)(out). In terms of biological role, component of the cytochrome c oxidase, the last enzyme in the mitochondrial electron transport chain which drives oxidative phosphorylation. The respiratory chain contains 3 multisubunit complexes succinate dehydrogenase (complex II, CII), ubiquinol-cytochrome c oxidoreductase (cytochrome b-c1 complex, complex III, CIII) and cytochrome c oxidase (complex IV, CIV), that cooperate to transfer electrons derived from NADH and succinate to molecular oxygen, creating an electrochemical gradient over the inner membrane that drives transmembrane transport and the ATP synthase. Cytochrome c oxidase is the component of the respiratory chain that catalyzes the reduction of oxygen to water. Electrons originating from reduced cytochrome c in the intermembrane space (IMS) are transferred via the dinuclear copper A center (CU(A)) of subunit 2 and heme A of subunit 1 to the active site in subunit 1, a binuclear center (BNC) formed by heme A3 and copper B (CU(B)). The BNC reduces molecular oxygen to 2 water molecules using 4 electrons from cytochrome c in the IMS and 4 protons from the mitochondrial matrix. The protein is Cytochrome c oxidase subunit 2 (MT-CO2) of Chlorocebus aethiops (Green monkey).